A 183-amino-acid polypeptide reads, in one-letter code: Abscisic acid receptor PYL10 (183 aa).

The START-like stretch occupies residues 20–172 (HELVESQCSS…NLNSLADVTE (153 aa)). An intrachain disulfide couples Cys27 to Cys153. Abscisate contacts are provided by residues Lys56, 85-90 (ATKSTE), 112-118 (RLKNYSS), and Glu137. A Gate loop motif is present at residues 81–85 (SGLPA). The short motif at 111-113 (HRL) is the Latch loop element.

It belongs to the PYR/PYL/RCAR abscisic acid intracellular receptor family. Monomer. Forms heterodimer with PYL13, thus antagonizing PP2Cs-binding and ABA-independent inhibition of PP2Cs. Homodimer. Binds ABA on one subunit only. Binds to CARs protein in an ABA-independent manner, both at the plasma membrane and in the nucleus. Interacts with ABI1 and HAB1, and possibly with other PP2Cs, in an ABA-independent manner.

The protein localises to the cytoplasm. It is found in the nucleus. It localises to the cell membrane. Receptor for abscisic acid (ABA) required for ABA-mediated responses such as stomatal closure and germination inhibition. Inhibits the activity of group-A protein phosphatases type 2C (PP2Cs) in an ABA-independent manner but more efficiently when activated by ABA. Can be activated by both (-)-ABA and (+)-ABA. The sequence is that of Abscisic acid receptor PYL10 (PYL10) from Arabidopsis thaliana (Mouse-ear cress).